The primary structure comprises 67 residues: DNA-directed RNA polymerase subunit omega (67 aa).

This sequence belongs to the RNA polymerase subunit omega family. As to quaternary structure, the RNAP catalytic core consists of 2 alpha, 1 beta, 1 beta' and 1 omega subunit. When a sigma factor is associated with the core the holoenzyme is formed, which can initiate transcription.

It carries out the reaction RNA(n) + a ribonucleoside 5'-triphosphate = RNA(n+1) + diphosphate. Its function is as follows. Promotes RNA polymerase assembly. Latches the N- and C-terminal regions of the beta' subunit thereby facilitating its interaction with the beta and alpha subunits. The sequence is that of DNA-directed RNA polymerase subunit omega from Burkholderia multivorans (strain ATCC 17616 / 249).